A 301-amino-acid chain; its full sequence is Phosphoribosylaminoimidazole-succinocarboxamide synthase (301 aa).

The protein belongs to the SAICAR synthetase family.

The catalysed reaction is 5-amino-1-(5-phospho-D-ribosyl)imidazole-4-carboxylate + L-aspartate + ATP = (2S)-2-[5-amino-1-(5-phospho-beta-D-ribosyl)imidazole-4-carboxamido]succinate + ADP + phosphate + 2 H(+). Its pathway is purine metabolism; IMP biosynthesis via de novo pathway; 5-amino-1-(5-phospho-D-ribosyl)imidazole-4-carboxamide from 5-amino-1-(5-phospho-D-ribosyl)imidazole-4-carboxylate: step 1/2. This chain is Phosphoribosylaminoimidazole-succinocarboxamide synthase, found in Syntrophobacter fumaroxidans (strain DSM 10017 / MPOB).